The sequence spans 115 residues: Large ribosomal subunit protein bL19 (115 aa).

The protein belongs to the bacterial ribosomal protein bL19 family.

Its function is as follows. This protein is located at the 30S-50S ribosomal subunit interface and may play a role in the structure and function of the aminoacyl-tRNA binding site. The protein is Large ribosomal subunit protein bL19 of Thermosipho africanus (strain TCF52B).